A 319-amino-acid polypeptide reads, in one-letter code: Olfactory receptor 5B21 (319 aa).

Topologically, residues 1 to 26 (MTSMENITEVTEFILLGLTDDPNLQV) are extracellular. The N-linked (GlcNAc...) asparagine glycan is linked to Asn6. A helical transmembrane segment spans residues 27 to 47 (PLLLIFLFIYLVTLIGNGGMM). The Cytoplasmic segment spans residues 48–55 (VIIFSDSH). A helical membrane pass occupies residues 56–76 (LHTPMYFFLSNLSFVDLGYSS). Residues 77-100 (AVAPKMVAALQSGNKVISYNGCAA) are Extracellular-facing. Residues Cys98 and Cys190 are joined by a disulfide bond. Residues 101 to 121 (QFFFFVGFATVECYLLASMAY) traverse the membrane as a helical segment. Residues 122-134 (DRHAAVCRPLHYT) lie on the Cytoplasmic side of the membrane. The helical transmembrane segment at 135 to 155 (TTMTTGVCTILTIGSYTCGFL) threads the bilayer. Residues 156 to 197 (NASIHAADTFKLSFCGSNKINHFFCDIPPLLALACSSTHISK) are Extracellular-facing. Residues 198 to 218 (LVVFFVVGFNVFFTLLVIIIS) traverse the membrane as a helical segment. The Cytoplasmic portion of the chain corresponds to 219–238 (YFFIYIAIQNMKSSEGRKKA). Residues 239 to 259 (FSTCASHLTAVSIFYGTIIFM) traverse the membrane as a helical segment. The Extracellular segment spans residues 260-272 (YLQPSSGQSMDTD). The helical transmembrane segment at 273-293 (KIASVFYTVVIPMLNPLIYSL) threads the bilayer. At 294–319 (RNREVKSALWKILNRFYPASFSVSRK) the chain is on the cytoplasmic side.

Belongs to the G-protein coupled receptor 1 family.

The protein resides in the cell membrane. Its function is as follows. Odorant receptor. This is Olfactory receptor 5B21 from Mus musculus (Mouse).